The sequence spans 295 residues: Small ribosomal subunit protein uS2 (295 aa).

Belongs to the universal ribosomal protein uS2 family. As to quaternary structure, component of the small ribosomal subunit. Mature ribosomes consist of a small (40S) and a large (60S) subunit. The 40S subunit contains about 33 different proteins and 1 molecule of RNA (18S). The 60S subunit contains about 49 different proteins and 3 molecules of RNA (25S, 5.8S and 5S). Interacts with RPS21.

It localises to the cytoplasm. Required for the assembly and/or stability of the 40S ribosomal subunit. Required for the processing of the 20S rRNA-precursor to mature 18S rRNA in a late step of the maturation of 40S ribosomal subunits. This Paracoccidioides brasiliensis (strain Pb03) protein is Small ribosomal subunit protein uS2.